A 405-amino-acid polypeptide reads, in one-letter code: CMP-sialic acid transporter 3 (405 aa).

The Cytoplasmic segment spans residues 1–39 (MKNGIAECPACHSKLVSPGSKTISRAYDDHKIRVSSKQR). The chain crosses the membrane as a helical span at residues 40 to 60 (VLNVLLVVGDCMLVGLQPVLV). Residues 61–73 (YMSKVDGKFNFSP) lie on the Lumenal side of the membrane. A helical transmembrane segment spans residues 74 to 94 (ISVNFLTEIAKVIFAIVMLLI). At 95 to 142 (QARHQKVGEKPLLSVSTFVQAARNNVLLAVPALLYAINNYLKFTMQLY) the chain is on the cytoplasmic side. A helical transmembrane segment spans residues 143–163 (FNPATVKMLSNLKVLVIAVLL). Residues 164 to 170 (KMVMKRR) lie on the Lumenal side of the membrane. A helical membrane pass occupies residues 171–191 (FSIIQWEALALLLIGISVNQL). Residues 192–199 (RSLPEGAT) are Cytoplasmic-facing. A helical transmembrane segment spans residues 200 to 220 (AIGIPLATGAYVCTVIFVTVP). Topologically, residues 221–243 (SMASVFNEYALKSQYDTSIYLQN) are lumenal. Residues 244-264 (LFLYGYGAIFNFLGILGTVIY) form a helical membrane-spanning segment. At 265–280 (KGPGSFDILQGHSRAT) the chain is on the cytoplasmic side. A helical membrane pass occupies residues 281-301 (MFLILNNAAQGILSSFFFKYA). The Lumenal segment spans residues 302–321 (DTILKKYSSTVATIFTGIAS). Residues 322–342 (AALFGHVITMNFLLGISIVFI) traverse the membrane as a helical segment. Residues 343–405 (SMHQFFSPLA…SDDRTPLLPR (63 aa)) lie on the Cytoplasmic side of the membrane. Residues 385-405 (GANEEASHRGESDDRTPLLPR) form a disordered region. Over residues 389–405 (EASHRGESDDRTPLLPR) the composition is skewed to basic and acidic residues.

The protein belongs to the nucleotide-sugar transporter family. CMP-Sialate:CMP antiporter (TC 2.A.7.12) subfamily.

The protein localises to the golgi apparatus membrane. Functionally, sugar transporter involved in the transport of CMP-sialic acid from the cytoplasm into the Golgi. The protein is CMP-sialic acid transporter 3 (UTR6) of Arabidopsis thaliana (Mouse-ear cress).